Here is a 445-residue protein sequence, read N- to C-terminus: Tubulin beta-3 chain (445 aa).

Residues Q11, E69, S138, G142, T143, G144, N204, and N226 each contribute to the GTP site. E69 lines the Mg(2+) pocket. The tract at residues 425–445 (YQDATAEEYDEEEQDGEEEHD) is disordered. Acidic residues predominate over residues 429 to 445 (TAEEYDEEEQDGEEEHD).

It belongs to the tubulin family. Dimer of alpha and beta chains. A typical microtubule is a hollow water-filled tube with an outer diameter of 25 nm and an inner diameter of 15 nM. Alpha-beta heterodimers associate head-to-tail to form protofilaments running lengthwise along the microtubule wall with the beta-tubulin subunit facing the microtubule plus end conferring a structural polarity. Microtubules usually have 13 protofilaments but different protofilament numbers can be found in some organisms and specialized cells. Mg(2+) serves as cofactor.

The protein resides in the cytoplasm. Its subcellular location is the cytoskeleton. In terms of biological role, tubulin is the major constituent of microtubules, a cylinder consisting of laterally associated linear protofilaments composed of alpha- and beta-tubulin heterodimers. Microtubules grow by the addition of GTP-tubulin dimers to the microtubule end, where a stabilizing cap forms. Below the cap, tubulin dimers are in GDP-bound state, owing to GTPase activity of alpha-tubulin. In Zea mays (Maize), this protein is Tubulin beta-3 chain (TUBB3).